A 501-amino-acid chain; its full sequence is E3 ubiquitin-protein ligase TRIM35 (501 aa).

Residue Met1 is modified to N-acetylmethionine. Ser8 is subject to Phosphoserine. The RING-type zinc finger occupies 21–61 (CAVCYDPFRDAVTLRCGHNFCRRCVSGCWEVQTTPSCPVCK). Residues 96-137 (RSPRPCRAHRAPLTLFCVEDKELLCCACQADARHQEHRVQPI) form a B box-type zinc finger. Zn(2+) contacts are provided by Cys101, His104, Cys123, and His129. Residues 209–252 (MKEESRKKHLLAEEKMKQLAEQTEALAREIERLQMEMKEDDMTF) are a coiled coil. In terms of domain architecture, B30.2/SPRY spans 284–495 (LESLQYRVWK…LRICHLRVSI (212 aa)).

Interacts with PKM isoform M2, but not isoform M1; this interaction may compete with that between PKM and FGFR1, and hence reduces FGFR1-dependent tyrosine phosphorylation of PKM. Interacts with IRF7; this interaction promotes IRF7 proteasomal degradation. Interacts with TRAF3; this interaction promotes TRAF3 activation.

The protein localises to the cytoplasm. The protein resides in the nucleus. It catalyses the reaction S-ubiquitinyl-[E2 ubiquitin-conjugating enzyme]-L-cysteine + [acceptor protein]-L-lysine = [E2 ubiquitin-conjugating enzyme]-L-cysteine + N(6)-ubiquitinyl-[acceptor protein]-L-lysine.. It participates in protein modification; protein ubiquitination. Functionally, E3 ubiquitin-protein ligase that participates in multiple biological processes including cell death, glucose metabolism, and in particular, the innate immune response. Mediates 'Lys-63'-linked polyubiquitination of TRAF3 thereby promoting type I interferon production via RIG-I signaling pathway. Can also catalyze 'Lys-48'-linked polyubiquitination and proteasomal degradation of viral proteins such as influenza virus PB2. Acts as a negative feedback regulator of TLR7- and TLR9-triggered signaling. Mechanistically, promotes the 'Lys-48'-linked ubiquitination of IRF7 and induces its degradation via a proteasome-dependent pathway. Reduces FGFR1-dependent tyrosine phosphorylation of PKM, inhibiting PKM-dependent lactate production, glucose metabolism, and cell growth. This is E3 ubiquitin-protein ligase TRIM35 (Trim35) from Rattus norvegicus (Rat).